The primary structure comprises 436 residues: MALLYAPQKKQKTTQKIVAEIQDLDYQGLGVAKIQGKTWFIENALPTEKVEAVVTDEKRQYGLATAQKWLQESSQRVEPQCRYYGRCGGCQGQHIPVEMQRKAKEKALFSRLSKLQAEPIQLMPMICGEQWAYRRRVRLSLLWNAKSKTVEMGFRQKNSNQLVSIQQCLVAEQAINDLIPKLTSLLAQYSAPKQLGHIELVSAENGVAMLLRYKGNLAETDRTLLLEFARVNAVNLFLQDDQNIQLVHGEMPYYALDDIRLSFDIRDFIQVNTRLNQQMVETALDWLDLNQDDHVLDLFCGMGNFTLPLAKRVKSAVGIEGVLDMVKKAQANAQFNHIENVEFYQADLDQSFSEQPWSKQHFNKILLDPPRSGAAFALNALCELGAESILYVSCNPATLVRDAEILRSFGYRIIKTAMIDMFPNTSHLESVTLFIK.

A TRAM domain is found at 10 to 68 (KQKTTQKIVAEIQDLDYQGLGVAKIQGKTWFIENALPTEKVEAVVTDEKRQYGLATAQK). The [4Fe-4S] cluster site is built by Cys-81, Cys-87, Cys-90, and Cys-168. Residues Gln-270, Phe-299, Asn-304, Glu-320, Asp-347, and Asp-368 each coordinate S-adenosyl-L-methionine. The active-site Nucleophile is Cys-394.

The protein belongs to the class I-like SAM-binding methyltransferase superfamily. RNA M5U methyltransferase family. RlmD subfamily.

It carries out the reaction uridine(1939) in 23S rRNA + S-adenosyl-L-methionine = 5-methyluridine(1939) in 23S rRNA + S-adenosyl-L-homocysteine + H(+). Catalyzes the formation of 5-methyl-uridine at position 1939 (m5U1939) in 23S rRNA. This chain is 23S rRNA (uracil(1939)-C(5))-methyltransferase RlmD, found in Haemophilus parainfluenzae (strain T3T1).